Reading from the N-terminus, the 415-residue chain is Putative competence-damage inducible protein (415 aa).

The protein belongs to the CinA family.

This chain is Putative competence-damage inducible protein, found in Listeria innocua serovar 6a (strain ATCC BAA-680 / CLIP 11262).